The following is a 354-amino-acid chain: Ferrochelatase (354 aa).

Residues His-214 and Glu-295 each contribute to the Fe cation site.

Belongs to the ferrochelatase family.

It is found in the cytoplasm. It carries out the reaction heme b + 2 H(+) = protoporphyrin IX + Fe(2+). It participates in porphyrin-containing compound metabolism; protoheme biosynthesis; protoheme from protoporphyrin-IX: step 1/1. Its function is as follows. Catalyzes the ferrous insertion into protoporphyrin IX. This Burkholderia cenocepacia (strain HI2424) protein is Ferrochelatase.